The sequence spans 150 residues: MRLEDIRPQAGSTRRRRRLGRGVSAGQGASCGKGMRGQKARKGGSTRPGFEGGQTPLYRRLPKLKHFPRYRRRLEYTLVNLRALADLPAGSEVSLESLMERGIVTTNDGPLKILGDGEVSVPLTIRAAAITASAKVKVEAAGGRVEILGS.

The disordered stretch occupies residues 1 to 57; it reads MRLEDIRPQAGSTRRRRRLGRGVSAGQGASCGKGMRGQKARKGGSTRPGFEGGQTPL. Gly residues predominate over residues 23–35; it reads VSAGQGASCGKGM.

Belongs to the universal ribosomal protein uL15 family. As to quaternary structure, part of the 50S ribosomal subunit.

Binds to the 23S rRNA. This is Large ribosomal subunit protein uL15 from Synechococcus sp. (strain JA-2-3B'a(2-13)) (Cyanobacteria bacterium Yellowstone B-Prime).